Consider the following 171-residue polypeptide: Co-chaperone protein HscB (171 aa).

In terms of domain architecture, J spans 2–74 (DYFTFFGLPA…LMRAEYLLSL (73 aa)).

The protein belongs to the HscB family. In terms of assembly, interacts with HscA and stimulates its ATPase activity. Interacts with IscU.

Functionally, co-chaperone involved in the maturation of iron-sulfur cluster-containing proteins. Seems to help targeting proteins to be folded toward HscA. The polypeptide is Co-chaperone protein HscB (Shigella sonnei (strain Ss046)).